We begin with the raw amino-acid sequence, 1339 residues long: Retrotransposon Gag-like protein 9 (1339 aa).

3 stretches are compositionally biased toward polar residues: residues 533-545, 679-693, and 700-711; these read TVPT…TQKT, SGTK…TTSG, and TRLSGPGATSTP. Disordered regions lie at residues 533-555, 679-711, 845-864, 880-901, 982-1010, and 1078-1116; these read TVPT…PMST, SGTK…TSTP, GVMS…SRPQ, PATA…LSTL, ATSL…GAGS, and ATDS…PPKE. Over residues 891 to 901 the composition is skewed to low complexity; the sequence is RSPASSTLSTL. Residues 1078–1106 are compositionally biased toward polar residues; sequence ATDSGEASTSHTRFTAPGSKSTPHMTSTA.

This is Retrotransposon Gag-like protein 9 from Mus musculus (Mouse).